Here is a 354-residue protein sequence, read N- to C-terminus: D-alanine--D-alanine ligase (354 aa).

The region spanning 154-348 is the ATP-grasp domain; that stretch reads RSWFLTNNIN…FTNLIEEIIK (195 aa). An ATP-binding site is contributed by 181–232; that stretch reads MKRPYVIKPITQGSSIGIEVIFEEDDFNFANYDFPYGDQVIIEKYIKGRELQ. Mg(2+) is bound by residues Glu301, Glu315, and Asn317.

This sequence belongs to the D-alanine--D-alanine ligase family. It depends on Mg(2+) as a cofactor. Requires Mn(2+) as cofactor.

Its subcellular location is the cytoplasm. It carries out the reaction 2 D-alanine + ATP = D-alanyl-D-alanine + ADP + phosphate + H(+). It participates in cell wall biogenesis; peptidoglycan biosynthesis. Functionally, cell wall formation. The polypeptide is D-alanine--D-alanine ligase (Rickettsia canadensis (strain McKiel)).